Here is a 207-residue protein sequence, read N- to C-terminus: LexA repressor (207 aa).

A DNA-binding region (H-T-H motif) is located at residues V28–A48. Residues S129 and K167 each act as for autocatalytic cleavage activity in the active site.

Belongs to the peptidase S24 family. In terms of assembly, homodimer.

The enzyme catalyses Hydrolysis of Ala-|-Gly bond in repressor LexA.. Its function is as follows. Represses a number of genes involved in the response to DNA damage (SOS response), including recA and lexA. In the presence of single-stranded DNA, RecA interacts with LexA causing an autocatalytic cleavage which disrupts the DNA-binding part of LexA, leading to derepression of the SOS regulon and eventually DNA repair. This is LexA repressor from Geobacillus sp. (strain WCH70).